The chain runs to 529 residues: NADPH-dependent thioredoxin reductase 3 (529 aa).

Residues 1–67 constitute a chloroplast transit peptide; that stretch reads MAASPKIGIG…SSDSLRLRVS (67 aa). Residues 54–78 form a disordered region; that stretch reads TRTRSSDSLRLRVSATANSPSSSSS. Over residues 64 to 78 the composition is skewed to low complexity; it reads LRVSATANSPSSSSS. FAD-binding positions include 91–94, 113–120, N133, V166, and C220; these read SGPA and EGYQMGGV. A disulfide bridge links C217 with C220. Residues T240, R265, I324, and Y344 each contribute to the NADP(+) site. FAD-binding positions include D364 and 371–374; that span reads RQAV. R371 serves as a coordination point for NADP(+). The Thioredoxin domain maps to 403 to 529; the sequence is PQTEEAKKEF…EYREFIEANK (127 aa). Residues C454 and C457 each act as nucleophile in the active site. The cysteines at positions 454 and 457 are disulfide-linked.

This sequence belongs to the class-II pyridine nucleotide-disulfide oxidoreductase family. In terms of assembly, may homodimerize. Interacts with the 2-Cys peroxiredoxin BAS1. The cofactor is FAD.

It localises to the plastid. The protein resides in the chloroplast. It carries out the reaction [thioredoxin]-dithiol + NADP(+) = [thioredoxin]-disulfide + NADPH + H(+). Its function is as follows. Thioredoxin reductase (TR) that exhibits both TR and thioredoxin (Trx) activities. Contains a C-terminal functional Trx domain. Functions as an electron donor for plastidial 2-Cys peroxiredoxins and participates in a NADPH-dependent hydrogen peroxide scavenging system in chloroplasts in the dark. Required for chlorophyll biosynthesis and biogenesis of the photosynthetic apparatus. Activates aerobic cyclase which converts Mg-protoporhyrin monomethyl ester into protochlorophyllide. Involved in a light-dependent regulation of starch biosynthesis by redox activation of the ADP-glucose pyrophosphorylase (AGPase), a central enzyme of starch synthesis. The protein is NADPH-dependent thioredoxin reductase 3 of Arabidopsis thaliana (Mouse-ear cress).